The chain runs to 169 residues: Ion-translocating oxidoreductase complex subunit B (169 aa).

The hydrophobic stretch occupies residues M1–S23. Residues S30–K89 enclose the 4Fe-4S domain. Residues C47, C50, C55, C72, C116, C119, C122, C126, C146, C149, C152, and C156 each contribute to the [4Fe-4S] cluster site. 2 4Fe-4S ferredoxin-type domains span residues S107–N136 and F137–M166.

The protein belongs to the 4Fe4S bacterial-type ferredoxin family. RnfB subfamily. As to quaternary structure, the complex is composed of six subunits: RnfA, RnfB, RnfC, RnfD, RnfE and RnfG. [4Fe-4S] cluster serves as cofactor.

The protein localises to the cell inner membrane. Functionally, part of a membrane-bound complex that couples electron transfer with translocation of ions across the membrane. The chain is Ion-translocating oxidoreductase complex subunit B from Buchnera aphidicola subsp. Baizongia pistaciae (strain Bp).